The chain runs to 276 residues: MVAMTAIQGAGIGLRSQHYAHILTHQPAIPWLEALSDNYLGGGLPLYHLEQIRAQYPITLHGVSLSLGSADPLNMDYLTQLKQLADRIEPVHVSDHLAWVSVNGHYFNDLAPLPYTESVLHYVADRISQVQEFLGRRILIENLSPYLQFRHNSLTEWQFLAALLVEADCHLLLDINNVYVNATNHGFDPLDYLDALPVDRIKEIHLAGYEEQDHFLFDTHGYPVQPGVWTLYQQALQRFGPVPTLIEWDTDIPSFDVLMAEAQQADTYLCQHRPQN.

This sequence belongs to the UPF0276 family.

The sequence is that of UPF0276 protein AM1_3026 from Acaryochloris marina (strain MBIC 11017).